Consider the following 120-residue polypeptide: Chaperonin GroEL (120 aa).

Position 23–27 (23–27) interacts with ATP; it reads DGTTT.

This sequence belongs to the chaperonin (HSP60) family. In terms of assembly, forms a cylinder of 14 subunits composed of two heptameric rings stacked back-to-back. Interacts with the co-chaperonin GroES.

It localises to the cytoplasm. The enzyme catalyses ATP + H2O + a folded polypeptide = ADP + phosphate + an unfolded polypeptide.. In terms of biological role, together with its co-chaperonin GroES, plays an essential role in assisting protein folding. The GroEL-GroES system forms a nano-cage that allows encapsulation of the non-native substrate proteins and provides a physical environment optimized to promote and accelerate protein folding. The protein is Chaperonin GroEL of Mycolicibacterium vaccae (Mycobacterium vaccae).